The chain runs to 626 residues: ATP-dependent RNA helicase cyt-19, mitochondrial (626 aa).

The short motif at 74-103 (ADLAALGVHENVVRAITHGMGYENMTEVQS) is the Q motif element. In terms of domain architecture, Helicase ATP-binding spans 106-297 (ISPALKGKDI…RSYIDKNNFE (192 aa)). An ATP-binding site is contributed by 119-126 (AKTGTGKT). The DEAD box motif lies at 241-244 (DEAD). A Helicase C-terminal domain is found at 329–493 (AMLELIEKAL…CASVNAADSG (165 aa)). Residues 569–626 (LRVETREHSMRPMGSGPGHRRDFNSRGPRRQSDDPFENALHRAQDLDRRPTRRQQASF) are disordered. The RNA-binding stretch occupies residues 578-626 (MRPMGSGPGHRRDFNSRGPRRQSDDPFENALHRAQDLDRRPTRRQQASF). A compositionally biased stretch (basic and acidic residues) spans 607 to 617 (ALHRAQDLDRR).

It belongs to the DEAD box helicase family.

It localises to the mitochondrion matrix. It carries out the reaction ATP + H2O = ADP + phosphate + H(+). Its activity is regulated as follows. Activated by exposed helices in a group I intron RNA. Acts as an RNA chaperone to resolve non-native structures formed during RNA folding to promote mitochondrial group I, but also group II, intron splicing. Functions predominantly by disrupting accessible RNA secondary structure and depends on spontaneous openings in tightly packed RNAs to gain access to RNA helices. This chain is ATP-dependent RNA helicase cyt-19, mitochondrial, found in Neurospora crassa (strain ATCC 24698 / 74-OR23-1A / CBS 708.71 / DSM 1257 / FGSC 987).